The chain runs to 414 residues: L-cysteine:1D-myo-inositol 2-amino-2-deoxy-alpha-D-glucopyranoside ligase (414 aa).

C44 contributes to the Zn(2+) binding site. L-cysteinyl-5'-AMP-binding positions include 44-47 (CGIT), T59, and 82-84 (NIT). Residues 46–56 (ITPYDSTHLGH) carry the 'HIGH' region motif. A 'ERGGDP' region motif is present at residues 188–193 (ERGGDP). An L-cysteinyl-5'-AMP-binding site is contributed by W228. Residue C232 participates in Zn(2+) binding. L-cysteinyl-5'-AMP is bound at residue 250–252 (GSD). H257 is a binding site for Zn(2+). I284 serves as a coordination point for L-cysteinyl-5'-AMP. A 'KMSKS' region motif is present at residues 290–294 (KMSKS).

The protein belongs to the class-I aminoacyl-tRNA synthetase family. MshC subfamily. In terms of assembly, monomer. Zn(2+) is required as a cofactor.

The enzyme catalyses 1D-myo-inositol 2-amino-2-deoxy-alpha-D-glucopyranoside + L-cysteine + ATP = 1D-myo-inositol 2-(L-cysteinylamino)-2-deoxy-alpha-D-glucopyranoside + AMP + diphosphate + H(+). In terms of biological role, catalyzes the ATP-dependent condensation of GlcN-Ins and L-cysteine to form L-Cys-GlcN-Ins. This chain is L-cysteine:1D-myo-inositol 2-amino-2-deoxy-alpha-D-glucopyranoside ligase (mshC), found in Corynebacterium diphtheriae (strain ATCC 700971 / NCTC 13129 / Biotype gravis).